The following is a 204-amino-acid chain: Recombination protein RecR (204 aa).

The segment at 58–75 (CSICQNVTDRGDDPCSIC) adopts a C4-type zinc-finger fold. The region spanning 83-181 (SKICVVESPP…EVTKIARGIP (99 aa)) is the Toprim domain.

It belongs to the RecR family.

May play a role in DNA repair. It seems to be involved in an RecBC-independent recombinational process of DNA repair. It may act with RecF and RecO. The chain is Recombination protein RecR from Chlorobium phaeobacteroides (strain BS1).